The sequence spans 436 residues: Ribulose bisphosphate carboxylase large chain (436 aa).

K4 bears the N6,N6,N6-trimethyllysine mark. The substrate site is built by N113 and T163. Catalysis depends on K165, which acts as the Proton acceptor. Residue K167 coordinates substrate. Mg(2+)-binding residues include K191, D193, and E194. K191 bears the N6-carboxylysine mark. H284 functions as the Proton acceptor in the catalytic mechanism. Residues R285, H317, and S369 each coordinate substrate.

This sequence belongs to the RuBisCO large chain family. Type I subfamily. In terms of assembly, heterohexadecamer of 8 large chains and 8 small chains; disulfide-linked. The disulfide link is formed within the large subunit homodimers. It depends on Mg(2+) as a cofactor. Post-translationally, the disulfide bond which can form in the large chain dimeric partners within the hexadecamer appears to be associated with oxidative stress and protein turnover.

The protein resides in the plastid. It localises to the chloroplast. It catalyses the reaction 2 (2R)-3-phosphoglycerate + 2 H(+) = D-ribulose 1,5-bisphosphate + CO2 + H2O. It carries out the reaction D-ribulose 1,5-bisphosphate + O2 = 2-phosphoglycolate + (2R)-3-phosphoglycerate + 2 H(+). Its function is as follows. RuBisCO catalyzes two reactions: the carboxylation of D-ribulose 1,5-bisphosphate, the primary event in carbon dioxide fixation, as well as the oxidative fragmentation of the pentose substrate in the photorespiration process. Both reactions occur simultaneously and in competition at the same active site. The protein is Ribulose bisphosphate carboxylase large chain of Sanguinaria canadensis (Bloodroot).